The following is a 256-amino-acid chain: GTP cyclohydrolase FolE2 (256 aa).

This sequence belongs to the GTP cyclohydrolase IV family.

The enzyme catalyses GTP + H2O = 7,8-dihydroneopterin 3'-triphosphate + formate + H(+). The protein operates within cofactor biosynthesis; 7,8-dihydroneopterin triphosphate biosynthesis; 7,8-dihydroneopterin triphosphate from GTP: step 1/1. Converts GTP to 7,8-dihydroneopterin triphosphate. The polypeptide is GTP cyclohydrolase FolE2 (Caldicellulosiruptor saccharolyticus (strain ATCC 43494 / DSM 8903 / Tp8T 6331)).